Reading from the N-terminus, the 376-residue chain is Fibromodulin (376 aa).

A signal peptide spans 1–18 (MQWTSLLLLAGLFSLSQA). Pyrrolidone carboxylic acid is present on glutamine 19. Sulfotyrosine is present on residues tyrosine 20, tyrosine 38, tyrosine 39, tyrosine 45, tyrosine 47, tyrosine 53, and tyrosine 55. One can recognise an LRRNT domain in the interval 67 to 105 (SPSPPDPRDCPQECDCPPNFPTAMYCDNRNLKYLPFVPS). LRR repeat units lie at residues 106 to 127 (RMKY…VFDN), 130 to 151 (GLLW…RKVF), 156 to 176 (HLER…PLPR), 177 to 198 (SLRE…ALEG), 201 to 222 (NLTA…MRGL), 224 to 245 (SLIL…LPSA), 246 to 266 (LEQL…YFRG), and 269 to 289 (KLLY…ASNT). Asparagine 127 carries an N-linked (GlcNAc...) (keratan sulfate) asparagine glycan. Residue asparagine 166 is glycosylated (N-linked (GlcNAc...) (keratan sulfate) asparagine). N-linked (GlcNAc...) (keratan sulfate) asparagine glycosylation occurs at asparagine 201. N-linked (GlcNAc...) (keratan sulfate) asparagine glycosylation occurs at asparagine 291. 2 LRR repeats span residues 294 to 315 (SLLE…NTNL) and 316 to 335 (ENLY…SFCT). An intrachain disulfide couples cysteine 334 to cysteine 367. Asparagine 341 is a glycosylation site (N-linked (GlcNAc...) asparagine). The LRR 11 repeat unit spans residues 344–365 (KLQVLRLDGNEIKRSAMPADAP).

This sequence belongs to the small leucine-rich proteoglycan (SLRP) family. SLRP class II subfamily. Binds to type I and type II collagen. Binds keratan sulfate chains.

The protein localises to the secreted. Its subcellular location is the extracellular space. It is found in the extracellular matrix. Its function is as follows. Affects the rate of fibrils formation. May have a primary role in collagen fibrillogenesis. The polypeptide is Fibromodulin (FMOD) (Homo sapiens (Human)).